Reading from the N-terminus, the 62-residue chain is Large ribosomal subunit protein bL28 (62 aa).

It belongs to the bacterial ribosomal protein bL28 family.

This is Large ribosomal subunit protein bL28 from Thermoanaerobacter sp. (strain X514).